The primary structure comprises 1248 residues: Apoptotic protease-activating factor 1 (1248 aa).

The 90-residue stretch at 1 to 90 (MDAKARNCLL…KDLAALLHDG (90 aa)) folds into the CARD domain. In terms of domain architecture, NB-ARC spans 104-415 (SGITSYVRTV…METEEVEDIL (312 aa)). ATP is bound by residues 154-161 (GMAGCGKS) and arginine 265. A WD 1-1 repeat occupies 613–652 (PHTDAVYHACFSEDGQRIASCGADKTLQVFKAETGEKLLE). The WD 1-2 repeat unit spans residues 655-694 (AHEDEVLCCAFSTDDRFIATCSVDKKVKIWNSMTGELVHT). A WD 1-3 repeat occupies 697–738 (EHSEQVNCCHFTNSSHHLLLATGSSDCFLKLWDLNQKECRNT). A WD 1-4 repeat occupies 741–780 (GHTNSVNHCRFSPDDKLLASCSADGTLKLWDATSANERKS). Residues 796 to 836 (DMEVIVKCCSWSADGARIMVAAKNKIFLFDIHTSGLLGEIH) form a WD 1-5 repeat. The WD 1-6 repeat unit spans residues 838–877 (GHHSTIQYCDFSPQNHLAVVALSQYCVELWNTDSRSKVAD). The stretch at 880–910 (GHLSWVHGVMFSPDGSSFLTSSDDQTIRLWE) is one WD 1-7 repeat. An interpropeller linker region spans residues 910–921 (ETKKVCKNSAVM). One copy of the WD 2-1 repeat lies at 922–958 (LKQEVDVVFQENEVMVLAVDHIRRLQLINGRTGQIDY). One copy of the WD 2-2 repeat lies at 959–998 (LTEAQVSCCCLSPHLQYIAFGDENGAIEILELVNNRIFQS). Residues 1001–1040 (QHKKTVWHIQFTADEKTLISSSDDAEIQVWNWQLDKCIFL) form a WD 2-3 repeat. Residues 1042–1080 (GHQETVKDFRLLKNSRLLSWSFDGTVKVWNIITGNKEKD) form a WD 2-4 repeat. One copy of the WD 2-5 repeat lies at 1083 to 1122 (CHQGTVLSCDISHDATKFSSTSADKTAKIWSFDLLLPLHE). A WD 2-6 repeat occupies 1125–1164 (GHNGCVRCSAFSVDSTLLATGDDNGEIRIWNVSNGELLHL). The WD 2-7 repeat unit spans residues 1175–1212 (THGGWVTDLCFSPDGKMLISAGGYIKWWNVVTGESSQT). Residues 1213 to 1248 (FYTNGTNLKKIHVSPDFKTYVTVDNLGILYILQTLE) form a WD 2-8 repeat.

Monomer. Oligomerizes to a heptameric ring, known as the apoptosome, upon binding of cytochrome c and dATP. Oligomeric Apaf-1 and pro-caspase-9 bind to each other via their respective NH2-terminal CARD domains and consecutively mature caspase-9 is released from the complex. Pro-caspase-3 is recruited into the Apaf-1-pro-caspase-9 complex via interaction with pro-caspase-9. Interacts with APIP. Interacts (via CARD and NACHT domains) with NAIP/BIRC1 (via NACHT domain). Interacts with CIAO2A. Ubiquitous. Highest levels of expression in adult spleen and peripheral blood leukocytes, and in fetal brain, kidney and lung. Isoform 1 is expressed in heart, kidney and liver.

It is found in the cytoplasm. In terms of biological role, oligomeric Apaf-1 mediates the cytochrome c-dependent autocatalytic activation of pro-caspase-9 (Apaf-3), leading to the activation of caspase-3 and apoptosis. This activation requires ATP. Isoform 6 is less effective in inducing apoptosis. This is Apoptotic protease-activating factor 1 from Homo sapiens (Human).